The primary structure comprises 241 residues: Thiamine import ATP-binding protein ThiQ (241 aa).

The region spanning 7–235 is the ABC transporter domain; that stretch reads IRLSDVRFSY…AGPEALRHYI (229 aa). 37–44 serves as a coordination point for ATP; it reads GPSGSGKS.

Belongs to the ABC transporter superfamily. Thiamine importer (TC 3.A.1.19.1) family. The complex is composed of two ATP-binding proteins (ThiQ), two transmembrane proteins (ThiP) and a solute-binding protein (ThiB).

Its subcellular location is the cell inner membrane. It carries out the reaction thiamine(out) + ATP + H2O = thiamine(in) + ADP + phosphate + H(+). Its function is as follows. Part of the ABC transporter complex ThiBPQ involved in thiamine import. Responsible for energy coupling to the transport system. The sequence is that of Thiamine import ATP-binding protein ThiQ from Brucella abortus biovar 1 (strain 9-941).